A 210-amino-acid chain; its full sequence is Glutathione S-transferase P (210 aa).

The GST N-terminal domain occupies 2-81 (PPYTIVYFPV…HLGRSLGLYG (80 aa)). Tyrosine 4 is modified (phosphotyrosine; by EGFR). Glutathione-binding positions include tyrosine 8, arginine 14, tryptophan 39, lysine 45, and 52 to 53 (QL). Threonine 62 is subject to Phosphothreonine. 65-66 (QS) contacts glutathione. The region spanning 83–204 (DQREAALVDM…SSPDHVNRPI (122 aa)) is the GST C-terminal domain. An N6-succinyllysine mark is found at lysine 103 and lysine 116. Residue lysine 128 is modified to N6-acetyllysine.

It belongs to the GST superfamily. Pi family. As to quaternary structure, homodimer. Interacts with CDK5.

Its subcellular location is the cytoplasm. The protein resides in the mitochondrion. It localises to the nucleus. The catalysed reaction is RX + glutathione = an S-substituted glutathione + a halide anion + H(+). It carries out the reaction prostaglandin J2 + glutathione = prostaglandin J2-S-(R)-glutathione. It catalyses the reaction prostaglandin J2 + glutathione = prostaglandin J2-S-(S)-glutathione. The enzyme catalyses prostaglandin A2 + glutathione = prostaglandin A2-S-(S)-glutathione. The catalysed reaction is 11(S)-hydroxy-14(S),15(S)-epoxy-(5Z,8Z,12E)-eicosatrienoate + glutathione = (11S,15S)-dihydroxy-14(R)-S-glutathionyl-(5Z,8Z,12E)-eicosatrienoate. Functionally, conjugation of reduced glutathione to a wide number of exogenous and endogenous hydrophobic electrophiles. Involved in the formation of glutathione conjugates of both prostaglandin A2 (PGA2) and prostaglandin J2 (PGJ2). Participates in the formation of novel hepoxilin regioisomers. Negatively regulates CDK5 activity via p25/p35 translocation to prevent neurodegeneration. This is Glutathione S-transferase P (GSTP1) from Cricetulus longicaudatus (Long-tailed dwarf hamster).